A 290-amino-acid polypeptide reads, in one-letter code: GTPase Era (290 aa).

In terms of domain architecture, Era-type G spans 2–168; the sequence is KVCIISILGR…IEILKEYAYN (167 aa). A G1 region spans residues 10–17; the sequence is GRPNVGKS. Position 10 to 17 (10 to 17) interacts with GTP; the sequence is GRPNVGKS. The interval 36–40 is G2; that stretch reads QTTRD. Residues 57-60 are G3; that stretch reads DTPG. GTP is bound by residues 57–61 and 118–121; these read DTPGI and SKID. The interval 118 to 121 is G4; sequence SKID. Residues 147–149 are G5; sequence VSN. One can recognise a KH type-2 domain in the interval 199–275; that stretch reads LTDELPHSIA…TLNLKVKVSN (77 aa).

This sequence belongs to the TRAFAC class TrmE-Era-EngA-EngB-Septin-like GTPase superfamily. Era GTPase family. Monomer.

Its subcellular location is the cytoplasm. It is found in the cell membrane. Functionally, an essential GTPase that binds both GDP and GTP, with rapid nucleotide exchange. Plays a role in 16S rRNA processing and 30S ribosomal subunit biogenesis and possibly also in cell cycle regulation and energy metabolism. The polypeptide is GTPase Era (Mycoplasmopsis agalactiae (strain NCTC 10123 / CIP 59.7 / PG2) (Mycoplasma agalactiae)).